The sequence spans 331 residues: Biotin synthase (331 aa).

Positions 40 to 269 (YRVQLASLLS…HARVRLSAGR (230 aa)) constitute a Radical SAM core domain. 3 residues coordinate [4Fe-4S] cluster: Cys55, Cys59, and Cys62. Residues Cys100, Cys132, Cys192, and Arg264 each contribute to the [2Fe-2S] cluster site.

It belongs to the radical SAM superfamily. Biotin synthase family. Homodimer. [4Fe-4S] cluster is required as a cofactor. It depends on [2Fe-2S] cluster as a cofactor.

It catalyses the reaction (4R,5S)-dethiobiotin + (sulfur carrier)-SH + 2 reduced [2Fe-2S]-[ferredoxin] + 2 S-adenosyl-L-methionine = (sulfur carrier)-H + biotin + 2 5'-deoxyadenosine + 2 L-methionine + 2 oxidized [2Fe-2S]-[ferredoxin]. Its pathway is cofactor biosynthesis; biotin biosynthesis; biotin from 7,8-diaminononanoate: step 2/2. Functionally, catalyzes the conversion of dethiobiotin (DTB) to biotin by the insertion of a sulfur atom into dethiobiotin via a radical-based mechanism. The chain is Biotin synthase from Synechococcus sp. (strain CC9605).